The chain runs to 913 residues: Protein SEY1 homolog (913 aa).

Over 1–825 (MANASKTQII…ETGGQMSLKN (825 aa)) the chain is Cytoplasmic. The GB1/RHD3-type G domain occupies 33–288 (GFNYNVIAIL…IPADGFAQYC (256 aa)). 43–50 (GSQSSGKS) lines the GTP pocket. 2 disordered regions span residues 89–108 (AGGSSEGTDAESKNKSGDKP) and 436–455 (TEQDDNLSNMDKSGESAKKG). Coiled-coil stretches lie at residues 636 to 659 (DDENNNFDEIDTEIDQSKNDMESL) and 703 to 727 (IEIIIDALKIKLDEISNDIANVIIN). Residues 826 to 846 (VPFAFWVILLILGWNEILMFT) form a helical membrane-spanning segment. The Lumenal portion of the chain corresponds to 847–849 (RLF). The helical transmembrane segment at 850–870 (FRLNIILPMFMAFIIIVGSCL) threads the bilayer. The Cytoplasmic segment spans residues 871–913 (YTGNAQVLSYLNKIAFIVIKHSYNFYKHLQTVGNQPTKPEKVD).

Belongs to the TRAFAC class dynamin-like GTPase superfamily. GB1/RHD3 GTPase family. RHD3 subfamily.

The protein localises to the endoplasmic reticulum membrane. Its function is as follows. Probable GTP-binding protein involved in generating and maintaining the structure of the tubular endoplasmic reticulum network. This is Protein SEY1 homolog from Plasmodium chabaudi chabaudi.